We begin with the raw amino-acid sequence, 291 residues long: Short-chain dehydrogenase/reductase GME11359 (291 aa).

Residues leucine 18, aspartate 67, asparagine 96, tyrosine 177, lysine 181, and valine 209 each coordinate NADP(+). Catalysis depends on tyrosine 177, which acts as the Proton acceptor. The Lowers pKa of active site Tyr role is filled by lysine 181.

Belongs to the short-chain dehydrogenases/reductases (SDR) family.

The protein operates within secondary metabolite biosynthesis. Short-chain dehydrogenase/reductase; part of the gene cluster that mediates the biosynthesis of dibenzodioxocinones such as pestalotiollide B, a novel class of inhibitors against cholesterol ester transfer protein (CEPT). The biosynthesis initiates from condensation of acetate and malonate units catalyzed by the non-reducing PKS pks8/GME11356. Pks8/GME11356 lacks a thioesterase (TE) domain, which is important to the cyclizing of the third ring of atrochrysone carboxylic acid, and the esterase GME11355 might play the role of TE and catalyzes the cyclization reaction of the C ring. The lactamase-like protein GME11357 (or other beta-lactamases in Pestalotiopsis microspora) probably hydrolyzes the thioester bond between the ACP of pks8/GME11356 and the intermediate to release atrochrysone carboxylic acid, which is spontaneously dehydrates to form endocrocin anthrone. Endocrocin anthrone is further converted to emodin via the endocrocin intermediate. Emodin is then oxidized by several enzymes such as the Baeyer-Villiger oxidase GME11358, the oxidoreductase GME11367, the short chain dehydrogenase/reductase GME11373, as well as by other oxidoreductases from the cluster, to modify the A and C rings and open the B ring, and finally yield monodictyphenone. The prenyltransferase GME11375 may catalyze the addition reaction between the C5 side chains and the carbon bone of dibenzodioxocinones. The remaining biochemical reactions to the final product dibenzodioxocinones should be methylation catalyzed by methyltransferase GME11366 and reduction and lactonization reaction catalyzed by a series of oxidordeuctases. The protein is Short-chain dehydrogenase/reductase GME11359 of Pestalotiopsis microspora.